The following is a 129-amino-acid chain: Phosphoribosyl-AMP cyclohydrolase (129 aa).

Aspartate 79 provides a ligand contact to Mg(2+). Cysteine 80 serves as a coordination point for Zn(2+). 2 residues coordinate Mg(2+): aspartate 81 and aspartate 83. Residues cysteine 96 and cysteine 103 each contribute to the Zn(2+) site.

Belongs to the PRA-CH family. In terms of assembly, homodimer. The cofactor is Mg(2+). Zn(2+) serves as cofactor.

The protein localises to the cytoplasm. The catalysed reaction is 1-(5-phospho-beta-D-ribosyl)-5'-AMP + H2O = 1-(5-phospho-beta-D-ribosyl)-5-[(5-phospho-beta-D-ribosylamino)methylideneamino]imidazole-4-carboxamide. The protein operates within amino-acid biosynthesis; L-histidine biosynthesis; L-histidine from 5-phospho-alpha-D-ribose 1-diphosphate: step 3/9. Functionally, catalyzes the hydrolysis of the adenine ring of phosphoribosyl-AMP. In Magnetococcus marinus (strain ATCC BAA-1437 / JCM 17883 / MC-1), this protein is Phosphoribosyl-AMP cyclohydrolase.